The primary structure comprises 346 residues: Methionine import ATP-binding protein MetN 1 (346 aa).

One can recognise an ABC transporter domain in the interval 2–241 (IEFKQVTKTF…PQHPTTEKFV (240 aa)). ATP is bound at residue 38-45 (GFSGAGKS).

This sequence belongs to the ABC transporter superfamily. Methionine importer (TC 3.A.1.24) family. As to quaternary structure, the complex is composed of two ATP-binding proteins (MetN), two transmembrane proteins (MetI) and a solute-binding protein (MetQ).

The protein localises to the cell membrane. The catalysed reaction is L-methionine(out) + ATP + H2O = L-methionine(in) + ADP + phosphate + H(+). The enzyme catalyses D-methionine(out) + ATP + H2O = D-methionine(in) + ADP + phosphate + H(+). Its function is as follows. Part of the ABC transporter complex MetNIQ involved in methionine import. Responsible for energy coupling to the transport system. The polypeptide is Methionine import ATP-binding protein MetN 1 (Shouchella clausii (strain KSM-K16) (Alkalihalobacillus clausii)).